The sequence spans 577 residues: Arginine--tRNA ligase (577 aa).

The 'HIGH' region motif lies at Pro122 to His132.

It belongs to the class-I aminoacyl-tRNA synthetase family. In terms of assembly, monomer.

The protein localises to the cytoplasm. It catalyses the reaction tRNA(Arg) + L-arginine + ATP = L-arginyl-tRNA(Arg) + AMP + diphosphate. This chain is Arginine--tRNA ligase, found in Escherichia coli O7:K1 (strain IAI39 / ExPEC).